Reading from the N-terminus, the 101-residue chain is Small ribosomal subunit protein uS14 (101 aa).

The span at 1–10 (MAKKSSVEKN) shows a compositional bias: basic and acidic residues. The tract at residues 1 to 23 (MAKKSSVEKNNRRKRMAKNAAPK) is disordered. Over residues 11-23 (NRRKRMAKNAAPK) the composition is skewed to basic residues.

Belongs to the universal ribosomal protein uS14 family. In terms of assembly, part of the 30S ribosomal subunit. Contacts proteins S3 and S10.

Functionally, binds 16S rRNA, required for the assembly of 30S particles and may also be responsible for determining the conformation of the 16S rRNA at the A site. This Bradyrhizobium sp. (strain BTAi1 / ATCC BAA-1182) protein is Small ribosomal subunit protein uS14.